The following is a 521-amino-acid chain: Protein YjiT (521 aa).

The protein is Protein YjiT (yjiT) of Escherichia coli (strain K12).